Consider the following 198-residue polypeptide: Recombination protein RecR (198 aa).

The C4-type zinc finger occupies 57 to 72 (CQRCNTFSEAELCAIC). One can recognise a Toprim domain in the interval 80–175 (DQLCIVEMPA…TVTRIARGMP (96 aa)).

Belongs to the RecR family.

In terms of biological role, may play a role in DNA repair. It seems to be involved in an RecBC-independent recombinational process of DNA repair. It may act with RecF and RecO. This Chromobacterium violaceum (strain ATCC 12472 / DSM 30191 / JCM 1249 / CCUG 213 / NBRC 12614 / NCIMB 9131 / NCTC 9757 / MK) protein is Recombination protein RecR.